We begin with the raw amino-acid sequence, 367 residues long: Alanine racemase (367 aa).

K40 functions as the Proton acceptor; specific for D-alanine in the catalytic mechanism. Position 40 is an N6-(pyridoxal phosphate)lysine (K40). R136 contributes to the substrate binding site. Y263 functions as the Proton acceptor; specific for L-alanine in the catalytic mechanism. Position 310 (M310) interacts with substrate.

This sequence belongs to the alanine racemase family. Pyridoxal 5'-phosphate serves as cofactor.

It catalyses the reaction L-alanine = D-alanine. It functions in the pathway amino-acid biosynthesis; D-alanine biosynthesis; D-alanine from L-alanine: step 1/1. Its function is as follows. Catalyzes the interconversion of L-alanine and D-alanine. May also act on other amino acids. The sequence is that of Alanine racemase (alr) from Streptococcus pneumoniae (strain ATCC 700669 / Spain 23F-1).